A 69-amino-acid polypeptide reads, in one-letter code: UPF0337 protein YjbJ (69 aa).

This sequence belongs to the UPF0337 (CsbD) family.

This chain is UPF0337 protein YjbJ (yjbJ), found in Escherichia coli O157:H7.